Consider the following 210-residue polypeptide: Isochorismatase domain-containing protein 2 (210 aa).

Ser7 is modified (phosphoserine).

The protein belongs to the isochorismatase family. In terms of assembly, interacts with CDKN2A.

Its subcellular location is the cytoplasm. The protein localises to the nucleus. The sequence is that of Isochorismatase domain-containing protein 2 (Isoc2) from Rattus norvegicus (Rat).